The following is a 371-amino-acid chain: Chorismate synthase (371 aa).

NADP(+) is bound by residues Arg-48 and Arg-54. Residues 125 to 127, 238 to 239, Gly-278, 293 to 297, and Arg-319 contribute to the FMN site; these read RSS, NA, and KPTSS.

This sequence belongs to the chorismate synthase family. Homotetramer. The cofactor is FMNH2.

It carries out the reaction 5-O-(1-carboxyvinyl)-3-phosphoshikimate = chorismate + phosphate. It functions in the pathway metabolic intermediate biosynthesis; chorismate biosynthesis; chorismate from D-erythrose 4-phosphate and phosphoenolpyruvate: step 7/7. Catalyzes the anti-1,4-elimination of the C-3 phosphate and the C-6 proR hydrogen from 5-enolpyruvylshikimate-3-phosphate (EPSP) to yield chorismate, which is the branch point compound that serves as the starting substrate for the three terminal pathways of aromatic amino acid biosynthesis. This reaction introduces a second double bond into the aromatic ring system. The sequence is that of Chorismate synthase from Polynucleobacter asymbioticus (strain DSM 18221 / CIP 109841 / QLW-P1DMWA-1) (Polynucleobacter necessarius subsp. asymbioticus).